The chain runs to 362 residues: Alcohol dehydrogenase 13 (362 aa).

Zn(2+) is bound by residues Cys51, His73, Cys104, Cys107, Cys110, Cys118, and Cys168. A substrate-binding site is contributed by His73. NAD(+)-binding positions include 193-198 (GLGGLG) and 280-282 (VGA).

The protein belongs to the zinc-containing alcohol dehydrogenase family. Class-III subfamily. In terms of assembly, homodimer. The cofactor is Zn(2+).

The chain is Alcohol dehydrogenase 13 from Catharanthus roseus (Madagascar periwinkle).